We begin with the raw amino-acid sequence, 173 residues long: Translation initiation factor IF-3 (173 aa).

This sequence belongs to the IF-3 family. Monomer.

The protein resides in the cytoplasm. Functionally, IF-3 binds to the 30S ribosomal subunit and shifts the equilibrium between 70S ribosomes and their 50S and 30S subunits in favor of the free subunits, thus enhancing the availability of 30S subunits on which protein synthesis initiation begins. The polypeptide is Translation initiation factor IF-3 (Phenylobacterium zucineum (strain HLK1)).